Reading from the N-terminus, the 237-residue chain is Ribonuclease PH (237 aa).

Phosphate-binding positions include Arg-86 and 124–126; that span reads GTR.

It belongs to the RNase PH family. As to quaternary structure, homohexameric ring arranged as a trimer of dimers.

It catalyses the reaction tRNA(n+1) + phosphate = tRNA(n) + a ribonucleoside 5'-diphosphate. In terms of biological role, phosphorolytic 3'-5' exoribonuclease that plays an important role in tRNA 3'-end maturation. Removes nucleotide residues following the 3'-CCA terminus of tRNAs; can also add nucleotides to the ends of RNA molecules by using nucleoside diphosphates as substrates, but this may not be physiologically important. Probably plays a role in initiation of 16S rRNA degradation (leading to ribosome degradation) during starvation. This is Ribonuclease PH from Shewanella sediminis (strain HAW-EB3).